Reading from the N-terminus, the 552-residue chain is FERRY endosomal RAB5 effector complex subunit 3 (552 aa).

Serine 79 carries the phosphoserine modification.

As to quaternary structure, component of the FERRY complex composed of five subunits, TBCK, PPP1R21, FERRY3, CRYZL1 and GATD1 with a ratio of 1:2:1:2:4, respectively.

It localises to the cytoplasm. The protein resides in the early endosome. Functionally, component of the FERRY complex (Five-subunit Endosomal Rab5 and RNA/ribosome intermediary). The FERRY complex directly interacts with mRNAs and RAB5A, and functions as a RAB5A effector involved in the localization and the distribution of specific mRNAs most likely by mediating their endosomal transport. The complex recruits mRNAs and ribosomes to early endosomes through direct mRNA-interaction. Plays a role in mast cell degranulation. The sequence is that of FERRY endosomal RAB5 effector complex subunit 3 from Mus musculus (Mouse).